The chain runs to 252 residues: Zinc finger protein 511 (252 aa).

3 consecutive C2H2-type zinc fingers follow at residues 80-105, 107-130, and 144-169; these read FACQVAGCCQVFDALDDYEHHYHTLH, NVCSFCKRAFPSGHLLDAHILEWH, and YQCLVEGCTEKFKTSRDRKDHMVRMH. The tract at residues 177 to 221 is disordered; the sequence is FDKPKKSRSPASAEAPGDSGERSEGEAMEICSEPVAASPAPAGER. Omega-N-methylarginine is present on R240.

The protein belongs to the krueppel C2H2-type zinc-finger protein family.

The protein localises to the nucleus. In terms of biological role, may be involved in transcriptional regulation. This Homo sapiens (Human) protein is Zinc finger protein 511.